The sequence spans 739 residues: uncharacterized protein (739 aa).

Transmembrane regions (helical) follow at residues 53-73 (LALG…ALTV), 90-110 (WHLF…AAIP), 114-134 (LMFI…GTFM), 178-198 (TYIL…QLGL), 421-441 (LIWI…VCIV), 457-477 (AFLR…LALM), 491-511 (GLAM…LPAV), and 532-552 (IVYF…SWMY).

The protein belongs to the aromatic acid exporter ArAE (TC 2.A.85) family.

It localises to the cell membrane. This is an uncharacterized protein from Gluconobacter oxydans (strain 621H) (Gluconobacter suboxydans).